The following is a 395-amino-acid chain: MCWPLLYPLMLGFSISPAECQTPSIYDDVESTREGQEASLRPTVELNESKSPDKPNPRGFPGKPCANNSDTLELPASSEALLLGWVPTRLVPAIYGLVVVVGLPANGLALWVLATRVPRLPSTILLMNLAVADLLLALVLPPRLVYHLRGQRWPFGEAACRVATAALYGHMYGSVLLLAAVSLDRYLALVHSLRARALRGQRLTTILCLVAWLSAATLVLPLTFHRQTFLLAGSDRMLCHDALPLAEQTSHWRPAFICLAVLGCFVPLLAMVLCYGATLRALAANGQRYSHAVRLTALVLFSAVAAFTPSNVLLVLHYSNPSPEAWGNLYGAYVPSLALSTLNSCVDPFIYYYVSHEFREKVRAMLCRQLKASSSSQASREAGSRGTAICSSTLL.

The N-terminal stretch at 1–16 (MCWPLLYPLMLGFSIS) is a signal peptide. Residues 17–58 (PAECQTPSIYDDVESTREGQEASLRPTVELNESKSPDKPNPR) constitute a propeptide, removed for receptor activation. A disordered region spans residues 46–66 (LNESKSPDKPNPRGFPGKPCA). Residues 47 to 56 (NESKSPDKPN) are compositionally biased toward basic and acidic residues. The Extracellular portion of the chain corresponds to 59-93 (GFPGKPCANNSDTLELPASSEALLLGWVPTRLVPA). Asparagine 67 carries N-linked (GlcNAc...) asparagine glycosylation. The helical transmembrane segment at 94–114 (IYGLVVVVGLPANGLALWVLA) threads the bilayer. The Cytoplasmic segment spans residues 115–119 (TRVPR). Residues 120-140 (LPSTILLMNLAVADLLLALVL) form a helical membrane-spanning segment. Topologically, residues 141–161 (PPRLVYHLRGQRWPFGEAACR) are extracellular. A disulfide bridge links cysteine 160 with cysteine 239. Residues 162 to 182 (VATAALYGHMYGSVLLLAAVS) form a helical membrane-spanning segment. Residues 183 to 203 (LDRYLALVHSLRARALRGQRL) are Cytoplasmic-facing. A helical transmembrane segment spans residues 204–224 (TTILCLVAWLSAATLVLPLTF). Residues 225 to 254 (HRQTFLLAGSDRMLCHDALPLAEQTSHWRP) are Extracellular-facing. The helical transmembrane segment at 255-275 (AFICLAVLGCFVPLLAMVLCY) threads the bilayer. Residues 276–295 (GATLRALAANGQRYSHAVRL) are Cytoplasmic-facing. The chain crosses the membrane as a helical span at residues 296–316 (TALVLFSAVAAFTPSNVLLVL). The Extracellular portion of the chain corresponds to 317 to 330 (HYSNPSPEAWGNLY). A helical transmembrane segment spans residues 331 to 354 (GAYVPSLALSTLNSCVDPFIYYYV). Over 355–395 (SHEFREKVRAMLCRQLKASSSSQASREAGSRGTAICSSTLL) the chain is Cytoplasmic.

This sequence belongs to the G-protein coupled receptor 1 family. A proteolytic cleavage generates a new N-terminus that functions as a tethered ligand.

The protein resides in the cell membrane. Its function is as follows. Receptor for activated thrombin or trypsin coupled to G proteins that stimulate phosphoinositide hydrolysis. May play a role in platelets activation. The sequence is that of Proteinase-activated receptor 4 (F2rl3) from Rattus norvegicus (Rat).